Here is a 657-residue protein sequence, read N- to C-terminus: tRNA uridine 5-carboxymethylaminomethyl modification enzyme MnmG (657 aa).

13-18 (GGGHAG) contributes to the FAD binding site. 281–295 (GPRYCPSVEDKINRF) contributes to the NAD(+) binding site.

It belongs to the MnmG family. In terms of assembly, homodimer. Heterotetramer of two MnmE and two MnmG subunits. It depends on FAD as a cofactor.

The protein resides in the cytoplasm. Its function is as follows. NAD-binding protein involved in the addition of a carboxymethylaminomethyl (cmnm) group at the wobble position (U34) of certain tRNAs, forming tRNA-cmnm(5)s(2)U34. In Acidovorax ebreus (strain TPSY) (Diaphorobacter sp. (strain TPSY)), this protein is tRNA uridine 5-carboxymethylaminomethyl modification enzyme MnmG.